The following is a 235-amino-acid chain: tRNA1(Val) (adenine(37)-N6)-methyltransferase (235 aa).

This sequence belongs to the methyltransferase superfamily. tRNA (adenine-N(6)-)-methyltransferase family.

It localises to the cytoplasm. The catalysed reaction is adenosine(37) in tRNA1(Val) + S-adenosyl-L-methionine = N(6)-methyladenosine(37) in tRNA1(Val) + S-adenosyl-L-homocysteine + H(+). In terms of biological role, specifically methylates the adenine in position 37 of tRNA(1)(Val) (anticodon cmo5UAC). The polypeptide is tRNA1(Val) (adenine(37)-N6)-methyltransferase (Flavobacterium johnsoniae (strain ATCC 17061 / DSM 2064 / JCM 8514 / BCRC 14874 / CCUG 350202 / NBRC 14942 / NCIMB 11054 / UW101) (Cytophaga johnsonae)).